The primary structure comprises 105 residues: Class II hydrophobin 1 (105 aa).

The N-terminal stretch at 1-15 (MQVLLIATLVASVLA) is a signal peptide. Cystine bridges form between C38–C87, C48–C78, C49–C58, and C88–C99.

This sequence belongs to the cerato-ulmin hydrophobin family. In terms of assembly, homotetramer. Further self-assembles to form highly ordered films at water-air interfaces through intermolecular interactions.

The protein resides in the secreted. It localises to the cell wall. Functionally, aerial growth, conidiation, and dispersal of filamentous fungi in the environment rely upon a capability of their secreting small amphipathic proteins called hydrophobins (HPBs) with low sequence identity. Class I can self-assemble into an outermost layer of rodlet bundles on aerial cell surfaces, conferring cellular hydrophobicity that supports fungal growth, development and dispersal; whereas Class II form highly ordered films at water-air interfaces through intermolecular interactions but contribute nothing to the rodlet structure. HYD1 is a class II hydrophobin that plays roles in conidiation and cuticle-bypassing infection by regulating the transcripts of frequency clock protein frq, and velvet protein vosA, as well as primordium formation via the mitogen-activated protein kinase signaling pathway. Also participates in stress response, including tolerance of mycelia to osmotic and oxidative stresses, and conidia to high or low temperature. Acts as a defensive factor against Calcarisporium cordycipiticola infection, probably via the formation of a physical barrier to inhibit the pathogen infection owing to its hydrophobicity or binding to the effector of C.cordycipiticola, hindering the recognition of the pathogen. Finally, regulates the transcription of the AreA transcription factor at different developmental stages via a positive feedback loop. This is Class II hydrophobin 1 from Cordyceps militaris (Caterpillar fungus).